The following is a 288-amino-acid chain: Bifunctional protein FolD (288 aa).

NADP(+) is bound by residues 166–168 (GAS) and Ile232.

The protein belongs to the tetrahydrofolate dehydrogenase/cyclohydrolase family. As to quaternary structure, homodimer.

The enzyme catalyses (6R)-5,10-methylene-5,6,7,8-tetrahydrofolate + NADP(+) = (6R)-5,10-methenyltetrahydrofolate + NADPH. The catalysed reaction is (6R)-5,10-methenyltetrahydrofolate + H2O = (6R)-10-formyltetrahydrofolate + H(+). Its pathway is one-carbon metabolism; tetrahydrofolate interconversion. Catalyzes the oxidation of 5,10-methylenetetrahydrofolate to 5,10-methenyltetrahydrofolate and then the hydrolysis of 5,10-methenyltetrahydrofolate to 10-formyltetrahydrofolate. This is Bifunctional protein FolD from Salmonella arizonae (strain ATCC BAA-731 / CDC346-86 / RSK2980).